The following is a 209-amino-acid chain: Small ribosomal subunit protein uS4 (209 aa).

One can recognise an S4 RNA-binding domain in the interval 98-164 (SRLDNVVYRG…TPFIVARETA (67 aa)).

Belongs to the universal ribosomal protein uS4 family. Part of the 30S ribosomal subunit. Contacts protein S5. The interaction surface between S4 and S5 is involved in control of translational fidelity.

Functionally, one of the primary rRNA binding proteins, it binds directly to 16S rRNA where it nucleates assembly of the body of the 30S subunit. In terms of biological role, with S5 and S12 plays an important role in translational accuracy. The protein is Small ribosomal subunit protein uS4 of Frankia casuarinae (strain DSM 45818 / CECT 9043 / HFP020203 / CcI3).